Here is a 1700-residue protein sequence, read N- to C-terminus: MDGNSLLSVPSNLESSRMYDVLEPQQGRGCGSSGSGPGNSITACKKVLRSNSLLESTDYWLQNQRMPCQIGFVEDKSENCASVCFVNLDVNKDECSTEHLQQKLVNVSPDLPKLISSMNVQQPKENEIVVLSGLASGNLQADFEVSQCPWLPDICLVQCARGNRPNSTNCIIFEINKFLIGLELVQERQLHLETNILKLEDDTNCSLSSIEEDFLTASEHLEEESEVDESRNDYENINVSANVLESKQLKGATQVEWNCNKEKWLYALEDKYINKYPTPLIKTERSPENLTKNTALQSLDPSAKPSQWKREAVGNGRQATHYYHSEAFKGQMEKSQALYIPKDAYFSMMDKDVPSACAVAEQRSNLNPGDHEDTRNALPPRQDGEVTTGKYATNLAESVLQDAFIRLSQSQSTLPQESAVSVSVGSSLLPSCYSTKDTVVSRSWNELPKIVVVQSPDGSDAAPQPGISSWPEMEVSVETSSILSGENSSRQPQSALEVALACAATVIGTISSPQATERLKMEQVVSNFPPGSSGALQTQAPQGLKEPSINEYSFPSALCGMTQVASAVAVCGLGEREEVTCSVAPSGSLPPAAEASEAMPPLCGLASMELGKEAIAKGLLKEAALVLTRPNTYSSIGDFLDSMNRRIMETASKSQTLCSENVVRNELAHTLSNVILRHSIDEVHHKNMIIDPNDNRHSSEILDTLMESTNQLLLDVICFTFKKMSHIVRLGECPAVLSKETIRRRETEPSCQPSDPGASQAWTKATESSSSSPLSNSHNTSLVINNLVDGMYSKQDKGGVRPGLFKNPTLQSQLSRSHRVPDSSTATTSSKEIYLKGIAGEDTKSPHHSENECRASSEGQRSPTVSQSRSGSQEAEESIHPNTQEKYNCATSRINEVQVNLSLLGDDLLLPAQSTLQTKHPDIYCITDFAEELADTVVSMATEIAAICLDNSSGKQPWFCAWKRGSEFLMTPNVPCRSLKRKKESQGSGTAVRKHKPPRLSEIKRKTDEHPELKEKLMNRVVDESMNLEDVPDSVNLFANEVAAKIMNLTEFSMVDGMWQAQGYPRNRLLSGDRWSRLKASSCESIPEEDSEARAYVNSLGLMSTLSQPVSRASSVSKQSSCESITDEFSRFMVNQMENEGRGFELLLDYYAGKNASSILNSAMQQACRKSDHLSVRPSCPSKQSSTESITEEFYRYMLRDIERDSRESASSRRSSQDWTAGLLSPSLRSPVCHRQSSMPDSRSPCSRLTVNVPIKANSLDGFAQNCPQDFLSVQPVSSASSSGLCKSDSCLYRRGGTDHITNMLIHETWASSIEALMRKNKIIVDDAEEADTEPVSGGSPSQAEKCANRLAASRMCSGPTLLVQESLDCPRKDSVTECKQPPVSSLSKTASLTNHSPLDSKKETSSCQDPVPINHKRRSLCSREVPLIQIETDQREACAGEPEPFLSKSSLLEEAEGHSNDKNIPDVVRGGDTAVSACQIHSDSLDTRDVPEAEASTEARAPDEAPNPPSSSEESTGSWTQLANEEDNPDDTSSFLQLSERSMSNGNSSATSSLGIMDLDIYQESMPSSPMINELVEEKKILKGQSESTEAPASGPPTGTASPQRSLLVINFDLEPECPDAELRATLQWIAASELGIPTIYFKKSQENRIEKFLDVVQLVHRKSWKVGDIFHAVVQYCKMHEEQKDGRLSLFDWLLELG.

Disordered regions lie at residues 364–385 (SNLNPGDHEDTRNALPPRQDGE), 742–778 (IRRRETEPSCQPSDPGASQAWTKATESSSSSPLSNSH), and 793–885 (SKQD…NTQE). The span at 768 to 778 (SSSSSPLSNSH) shows a compositional bias: low complexity. The span at 822–831 (DSSTATTSSK) shows a compositional bias: polar residues. The span at 839–855 (AGEDTKSPHHSENECRA) shows a compositional bias: basic and acidic residues. The segment covering 857–873 (SEGQRSPTVSQSRSGSQ) has biased composition (polar residues). The PKA-RII subunit binding domain stretch occupies residues 929–946 (FAEELADTVVSMATEIAA). The disordered stretch occupies residues 980-1006 (KRKKESQGSGTAVRKHKPPRLSEIKRK). A phosphoserine mark is found at serine 1025, serine 1085, serine 1107, serine 1120, serine 1121, serine 1124, serine 1259, and serine 1288. Disordered stretches follow at residues 1374–1414 (DSVT…PVPI), 1481–1535 (IHSD…DTSS), and 1585–1604 (GQSESTEAPASGPPTGTASP). Positions 1383-1398 (PVSSLSKTASLTNHSP) are enriched in polar residues. A compositionally biased stretch (polar residues) spans 1586 to 1604 (QSESTEAPASGPPTGTASP).

It belongs to the AKAP110 family. In terms of assembly, interacts (via the PKA-RII subunit binding domain) with the RI subunit of PKA. Interacts with SPHK1; the interaction greatly reduces SPHK1 activity. In terms of tissue distribution, highly expressed in heart. Both isoforms abundantly expressed in ventricle. Also expressed in spleen, ovary and brain.

It localises to the cytoplasm. In terms of biological role, anchoring protein that binds preferentially to the type I regulatory subunit of c-AMP-dependent protein kinase (PKA type I) and targets it to distinct subcellular compartments. May act as a converging factor linking cAMP and sphingosine signaling pathways. Plays a regulatory role in the modulation of SPHK1. This is A-kinase anchor protein SPHKAP (SPHKAP) from Homo sapiens (Human).